Here is an 819-residue protein sequence, read N- to C-terminus: Eukaryotic translation initiation factor 3 subunit C (819 aa).

Positions 1-106 are disordered; it reads MSRFFLKTYE…DSSDEEDGKK (106 aa). 2 stretches are compositionally biased toward acidic residues: residues 17–41 and 47–59; these read GEEEDLLSQSEEDLVSSSSEEELSD and DSDESSDNDEDND. The region spanning 620 to 795 is the PCI domain; sequence FHQHINLDLI…EYIIFERGEE (176 aa).

It belongs to the eIF-3 subunit C family. As to quaternary structure, component of the eukaryotic translation initiation factor 3 (eIF-3) complex.

The protein resides in the cytoplasm. Its function is as follows. Component of the eukaryotic translation initiation factor 3 (eIF-3) complex, which is involved in protein synthesis of a specialized repertoire of mRNAs and, together with other initiation factors, stimulates binding of mRNA and methionyl-tRNAi to the 40S ribosome. The eIF-3 complex specifically targets and initiates translation of a subset of mRNAs involved in cell proliferation. The sequence is that of Eukaryotic translation initiation factor 3 subunit C from Kluyveromyces lactis (strain ATCC 8585 / CBS 2359 / DSM 70799 / NBRC 1267 / NRRL Y-1140 / WM37) (Yeast).